Reading from the N-terminus, the 463-residue chain is Perilipin-5 (463 aa).

The segment at 1–108 is interaction with LIPE; it reads MSEEEAAQIP…KLEEKLPFLQ (108 aa). An essential for lipid droplet targeting region spans residues 1–173; that stretch reads MSEEEAAQIP…HFLPMTEEEL (173 aa). Phosphoserine is present on residues S2, S148, and S322. Positions 185–463 are interaction with PNPLA2 and ABHD5; the sequence is VGSVEDQRRQ…KHTLMPELDF (279 aa). The interval 444 to 463 is recruits mitochondria at the lipid droplet surface; sequence QEPETPSCPVKHTLMPELDF.

Belongs to the perilipin family. Homooligomer. Interacts with PNPLA2; prevents interaction of PNPLA2 with ABHD5. Interacts with ABHD5; targets ABHD5 to lipid droplets and promotes interaction of ABHD5 with PNPLA2. Interacts with LIPE. Post-translationally, phosphorylated by PKA. Phosphorylated on serine in skeletal muscle at rest or upon lipolytic stimulation. Expressed in skeletal muscle, liver, heart and kidney.

Its subcellular location is the lipid droplet. The protein localises to the cytoplasm. It is found in the mitochondrion. Its function is as follows. Lipid droplet-associated protein that maintains the balance between lipogenesis and lipolysis and also regulates fatty acid oxidation in oxidative tissues. Recruits mitochondria to the surface of lipid droplets and is involved in lipid droplet homeostasis by regulating both the storage of fatty acids in the form of triglycerides and the release of fatty acids for mitochondrial fatty acid oxidation. In lipid droplet triacylglycerol hydrolysis, plays a role as a scaffolding protein for three major key lipolytic players: ABHD5, PNPLA2 and LIPE. Reduces the triacylglycerol hydrolase activity of PNPLA2 by recruiting and sequestering PNPLA2 to lipid droplets. Phosphorylation by PKA enables lipolysis probably by promoting release of ABHD5 from the perilipin scaffold and by facilitating interaction of ABHD5 with PNPLA2. Also increases lipolysis through interaction with LIPE and upon PKA-mediated phosphorylation of LIPE. In Homo sapiens (Human), this protein is Perilipin-5 (PLIN5).